The primary structure comprises 103 residues: Glutaredoxin-C1 (103 aa).

The 102-residue stretch at 1 to 102 (MDRVNRLAAQ…PLLRNAGALW (102 aa)) folds into the Glutaredoxin domain. Cys-21 and Cys-24 are disulfide-bonded.

This sequence belongs to the glutaredoxin family. CC-type subfamily.

It localises to the cytoplasm. Functionally, has a glutathione-disulfide oxidoreductase activity in the presence of NADPH and glutathione reductase. Reduces low molecular weight disulfides and proteins. In Oryza sativa subsp. japonica (Rice), this protein is Glutaredoxin-C1 (GRXC1).